Consider the following 1163-residue polypeptide: Spike glycoprotein (1163 aa).

A signal peptide spans 1–18 (MLERSLLLATLLSALCSA). Residues 19 to 1096 (NLFGNNSYVY…LKTYIKWPWY (1078 aa)) are Extracellular-facing. N-linked (GlcNAc...) asparagine; by host glycosylation is found at Asn-23, Asn-51, Asn-74, Asn-102, Asn-139, Asn-145, Asn-164, Asn-179, Asn-213, Asn-238, Asn-248, Asn-265, Asn-272, Asn-277, Asn-307, Asn-426, Asn-448, Asn-514, Asn-531, Asn-543, Asn-580, Asn-592, Asn-670, and Asn-677. Residues 770–875 (IPFATQLQAR…QVDRIITGRL (106 aa)) are heptad repeat 1 (HR1). A coiled-coil region spans residues 823–867 (QDVVNKQSSILTETMASLNKNFGAISSVLQDIYQQLDSIQADAQV). N-linked (GlcNAc...) asparagine; by host glycans are attached at residues Asn-948, Asn-961, Asn-980, Asn-1015, Asn-1039, Asn-1052, and Asn-1075. Residues 1025–1106 (NDDFDFDDEL…VWLAIAFLTI (82 aa)) are heptad repeat 2 (HR2). A coiled-coil region spans residues 1056–1084 (PILDIGSEIDRIQGVIQGLNDSLIDLETL). The chain crosses the membrane as a helical span at residues 1097-1117 (VWLAIAFLTIIFILVLCWIFF). Residues 1118–1163 (MTGCCGCCCGCFGIIPLMSKCGKKSSYYTTFDNDVVYEQYRPKKSV) are Cytoplasmic-facing. A Di-lysine motif motif is present at residues 1160-1163 (KKSV).

Belongs to the gammacoronaviruses spike protein family. In terms of assembly, homotrimer; each monomer consists of a S1 and a S2 subunit. The resulting peplomers protrude from the virus surface as spikes. Specific enzymatic cleavages in vivo yield mature proteins. The precursor is processed into S1 and S2 by host cell furin or furin-like protease to yield the mature S1 and S2 proteins. The cleavage site between S1 and S2 requires the optimal sequence [KR]-X-[KR]-R. Additionally, a second cleavage leads to the release of a fusion peptide after viral attachment to host cell receptor.

The protein resides in the virion membrane. The protein localises to the host endoplasmic reticulum-Golgi intermediate compartment membrane. Attaches the virion to the host cell membrane by interacting with sialic acids, initiating the infection. In terms of biological role, mediates fusion of the virion and cellular membranes by acting as a class I viral fusion protein. Under the current model, the protein has at least 3 conformational states: pre-fusion native state, pre-hairpin intermediate state, and post-fusion hairpin state. During viral and target cell membrane fusion, the coiled coil regions (heptad repeats) assume a trimer-of-hairpins structure, positioning the fusion peptide in close proximity to the C-terminal region of the ectodomain. The formation of this structure appears to drive apposition and subsequent fusion of viral and target cell membranes. Its function is as follows. Acts as a viral fusion peptide after S2 cleavage occurring upon virus endocytosis. The sequence is that of Spike glycoprotein from Gallus gallus (Chicken).